The following is a 601-amino-acid chain: MGDEMLKERLKKVPLQPGVYLFKNQEGQVLYVGKARVLRQRMRSYFQAPERMHPKVKAMMAWVSDFDFIVTHSEMEALILENNLIKSYKPRYNIDLRDDKSYPYIKVTVADKFPRVYLAREKKDGVSRYFGPYTDVTSLRDTLKLLNGVFGLRSCRTMKSRRRPCLNRDMGKCLSPCSGEISEEEYSQKVQALITFLEGDFQEIVREKEKEMAMAARSLEFEKAARLRDQIQSLRQLGEKQKIELASPYELDLVGMLSGEKENLVLVFKVRSGKIVGKDTFWLKRPIQEDENEAMEFFIKHYYDENPDIPPEILLSHLPSESKLVEAWLKSRVSHRVELRVPQRGEKKQVLNMLLENARLLLEEKQREENKQLAALSHLARVLDLEVVPNRLECFDVSHLAGEETVASMVVFVGGQPEKKAYRHFKIRTQQNNDTASLAETVRRRLENARQANPAFLPEPDLILVDGGLGQVNAVAAVLQEMNLDIPLFALAEKNEEIYRPGKSQPLVLAARDNGLQLLQRLRDEAHRFAIEYNRKRRAKKIRSSALDEIPGIGKQRKKNLLVHFTSVAKIKEASLDEIAAVPGMNRKAALAVIEFFHNQD.

Residues 15-94 enclose the GIY-YIG domain; that stretch reads LQPGVYLFKN…IKSYKPRYNI (80 aa). The 36-residue stretch at 202–237 folds into the UVR domain; that stretch reads QEIVREKEKEMAMAARSLEFEKAARLRDQIQSLRQL.

It belongs to the UvrC family. Interacts with UvrB in an incision complex.

It localises to the cytoplasm. Functionally, the UvrABC repair system catalyzes the recognition and processing of DNA lesions. UvrC both incises the 5' and 3' sides of the lesion. The N-terminal half is responsible for the 3' incision and the C-terminal half is responsible for the 5' incision. The chain is UvrABC system protein C from Syntrophomonas wolfei subsp. wolfei (strain DSM 2245B / Goettingen).